A 90-amino-acid polypeptide reads, in one-letter code: UPF0367 protein Ava_2513 (90 aa).

The protein belongs to the UPF0367 family.

The sequence is that of UPF0367 protein Ava_2513 from Trichormus variabilis (strain ATCC 29413 / PCC 7937) (Anabaena variabilis).